The chain runs to 232 residues: Orotidine 5'-phosphate decarboxylase (232 aa).

Substrate contacts are provided by residues D13, K35, 62 to 71, T121, R182, Q191, G211, and R212; that span reads DLKFHDIPNT. The Proton donor role is filled by K64.

This sequence belongs to the OMP decarboxylase family. Type 1 subfamily. In terms of assembly, homodimer.

It carries out the reaction orotidine 5'-phosphate + H(+) = UMP + CO2. The protein operates within pyrimidine metabolism; UMP biosynthesis via de novo pathway; UMP from orotate: step 2/2. Catalyzes the decarboxylation of orotidine 5'-monophosphate (OMP) to uridine 5'-monophosphate (UMP). The chain is Orotidine 5'-phosphate decarboxylase from Acinetobacter baumannii (strain ACICU).